The primary structure comprises 433 residues: 23S rRNA (uracil(1939)-C(5))-methyltransferase RlmD (433 aa).

The 59-residue stretch at 10–68 (RTTTRQIITVSVNDLDSFGQGVARHNGKTLFIPGLLPQENAEVAVTEDKKQYARAKVVR) folds into the TRAM domain. Residues cysteine 81, cysteine 87, cysteine 90, and cysteine 162 each contribute to the [4Fe-4S] cluster site. S-adenosyl-L-methionine-binding residues include glutamine 265, phenylalanine 294, asparagine 299, glutamate 315, asparagine 342, and aspartate 363. The Nucleophile role is filled by cysteine 389.

Belongs to the class I-like SAM-binding methyltransferase superfamily. RNA M5U methyltransferase family. RlmD subfamily.

The enzyme catalyses uridine(1939) in 23S rRNA + S-adenosyl-L-methionine = 5-methyluridine(1939) in 23S rRNA + S-adenosyl-L-homocysteine + H(+). In terms of biological role, catalyzes the formation of 5-methyl-uridine at position 1939 (m5U1939) in 23S rRNA. The chain is 23S rRNA (uracil(1939)-C(5))-methyltransferase RlmD from Shigella flexneri.